The sequence spans 590 residues: UvrABC system protein C (590 aa).

A GIY-YIG domain is found at Glu-11–Val-85. The region spanning Asp-194 to Phe-229 is the UVR domain.

Belongs to the UvrC family. Interacts with UvrB in an incision complex.

The protein resides in the cytoplasm. The UvrABC repair system catalyzes the recognition and processing of DNA lesions. UvrC both incises the 5' and 3' sides of the lesion. The N-terminal half is responsible for the 3' incision and the C-terminal half is responsible for the 5' incision. This is UvrABC system protein C from Thermus thermophilus (strain ATCC 27634 / DSM 579 / HB8).